A 197-amino-acid chain; its full sequence is Potassium-transporting ATPase KdpC subunit (197 aa).

A helical transmembrane segment spans residues 7–27 (PALVSMGLFTVLLGLAYPLAV).

This sequence belongs to the KdpC family. In terms of assembly, the system is composed of three essential subunits: KdpA, KdpB and KdpC.

The protein resides in the cell inner membrane. Its function is as follows. Part of the high-affinity ATP-driven potassium transport (or Kdp) system, which catalyzes the hydrolysis of ATP coupled with the electrogenic transport of potassium into the cytoplasm. This subunit acts as a catalytic chaperone that increases the ATP-binding affinity of the ATP-hydrolyzing subunit KdpB by the formation of a transient KdpB/KdpC/ATP ternary complex. The sequence is that of Potassium-transporting ATPase KdpC subunit from Caulobacter vibrioides (strain ATCC 19089 / CIP 103742 / CB 15) (Caulobacter crescentus).